Here is a 130-residue protein sequence, read N- to C-terminus: Small ribosomal subunit protein uS9 (130 aa).

The segment at 104 to 130 (LTRDPRMKERRKYGLKKARKAPQFSKR) is disordered. Basic residues predominate over residues 111-130 (KERRKYGLKKARKAPQFSKR).

This sequence belongs to the universal ribosomal protein uS9 family.

This is Small ribosomal subunit protein uS9 from Moorella thermoacetica (strain ATCC 39073 / JCM 9320).